The following is a 181-amino-acid chain: Ribosome maturation factor RimM (181 aa).

The PRC barrel domain maps to Glu-99–Gly-172.

The protein belongs to the RimM family. In terms of assembly, binds ribosomal protein uS19.

It is found in the cytoplasm. In terms of biological role, an accessory protein needed during the final step in the assembly of 30S ribosomal subunit, possibly for assembly of the head region. Essential for efficient processing of 16S rRNA. May be needed both before and after RbfA during the maturation of 16S rRNA. It has affinity for free ribosomal 30S subunits but not for 70S ribosomes. The sequence is that of Ribosome maturation factor RimM from Bartonella tribocorum (strain CIP 105476 / IBS 506).